The primary structure comprises 206 residues: GTP cyclohydrolase 1 (206 aa).

Positions 95, 98, and 166 each coordinate Zn(2+).

This sequence belongs to the GTP cyclohydrolase I family. Toroid-shaped homodecamer, composed of two pentamers of five dimers.

It catalyses the reaction GTP + H2O = 7,8-dihydroneopterin 3'-triphosphate + formate + H(+). Its pathway is cofactor biosynthesis; 7,8-dihydroneopterin triphosphate biosynthesis; 7,8-dihydroneopterin triphosphate from GTP: step 1/1. The sequence is that of GTP cyclohydrolase 1 from Bartonella henselae (strain ATCC 49882 / DSM 28221 / CCUG 30454 / Houston 1) (Rochalimaea henselae).